A 505-amino-acid polypeptide reads, in one-letter code: RNA-splicing ligase RtcB homolog (505 aa).

Positions 119, 122, 227, 259, and 353 each coordinate Mn(2+). 226 to 230 serves as a coordination point for GMP; it reads NHYAE. GMP-binding positions include 353-354, 402-405, Ser-409, 428-431, and Lys-504; these read HN, GGTM, and HGAG. The active-site GMP-histidine intermediate is the His-428.

The protein belongs to the RtcB family. In terms of assembly, catalytic component of the tRNA-splicing ligase complex. Mn(2+) serves as cofactor.

It catalyses the reaction a 3'-end 3'-phospho-ribonucleotide-RNA + a 5'-end dephospho-ribonucleoside-RNA + GTP = a ribonucleotidyl-ribonucleotide-RNA + GMP + diphosphate. The enzyme catalyses a 3'-end 2',3'-cyclophospho-ribonucleotide-RNA + a 5'-end dephospho-ribonucleoside-RNA + GTP + H2O = a ribonucleotidyl-ribonucleotide-RNA + GMP + diphosphate + H(+). In terms of biological role, catalytic subunit of the tRNA-splicing ligase complex that acts by directly joining spliced tRNA halves to mature-sized tRNAs by incorporating the precursor-derived splice junction phosphate into the mature tRNA as a canonical 3',5'-phosphodiester. May act as an RNA ligase with broad substrate specificity, and may function toward other RNAs. This chain is RNA-splicing ligase RtcB homolog, found in Nematostella vectensis (Starlet sea anemone).